We begin with the raw amino-acid sequence, 1033 residues long: TBC domain-containing protein kinase-like protein (1033 aa).

Disordered regions lie at residues 1–21 (MMKSDEGVSGNSNNNNNYKFK), 35–55 (YDNNNNNNNNNNNNDDNNTVT), and 81–101 (GSIGGSSSSSSTSNSVSTPKP). Composition is skewed to low complexity over residues 36 to 52 (DNNNNNNNNNNNNDDNN) and 81 to 97 (GSIGGSSSSSSTSNSVS). The Protein kinase domain maps to 72-425 (NKLTINQNNG…SETLLDHPYF (354 aa)). ATP is bound by residues 78–86 (QNNGSIGGS) and Lys-113. The span at 535 to 546 (STNSGLNSPQPY) shows a compositional bias: polar residues. A disordered region spans residues 535–560 (STNSGLNSPQPYQHQHHQHQHQHQHP). The span at 548–558 (HQHHQHQHQHQ) shows a compositional bias: basic residues. The Rab-GAP TBC domain maps to 657–844 (FVPPILRGDI…ILWDSILLCP (188 aa)).

The protein belongs to the protein kinase superfamily. Ser/Thr protein kinase family.

The chain is TBC domain-containing protein kinase-like protein (tbck) from Dictyostelium discoideum (Social amoeba).